We begin with the raw amino-acid sequence, 717 residues long: Amino-acid acetyltransferase, mitochondrial (717 aa).

The transit peptide at 1–23 (MFIWTKAPARGLGKASKILPKRD) directs the protein to the mitochondrion. Positions 35–70 (KQFHTATTSVRRSSSSAKERQRAERQQLTRLLKESP) are disordered. The segment covering 39-50 (TATTSVRRSSSS) has biased composition (low complexity). Residues 51-70 (AKERQRAERQQLTRLLKESP) show a composition bias toward basic and acidic residues. The N-acetyltransferase domain maps to 518–691 (NPSIELADDP…GDVDDAKKRD (174 aa)).

Belongs to the acetyltransferase family.

The protein resides in the mitochondrion. The enzyme catalyses L-glutamate + acetyl-CoA = N-acetyl-L-glutamate + CoA + H(+). Its pathway is amino-acid biosynthesis; L-arginine biosynthesis; N(2)-acetyl-L-ornithine from L-glutamate: step 1/4. Its function is as follows. N-acetylglutamate synthase involved in arginine biosynthesis. The protein is Amino-acid acetyltransferase, mitochondrial (arg2) of Pyrenophora tritici-repentis (strain Pt-1C-BFP) (Wheat tan spot fungus).